Here is a 962-residue protein sequence, read N- to C-terminus: Glycine dehydrogenase (decarboxylating) (962 aa).

Position 710 is an N6-(pyridoxal phosphate)lysine (Lys710).

This sequence belongs to the GcvP family. The glycine cleavage system is composed of four proteins: P, T, L and H. It depends on pyridoxal 5'-phosphate as a cofactor.

The catalysed reaction is N(6)-[(R)-lipoyl]-L-lysyl-[glycine-cleavage complex H protein] + glycine + H(+) = N(6)-[(R)-S(8)-aminomethyldihydrolipoyl]-L-lysyl-[glycine-cleavage complex H protein] + CO2. Its function is as follows. The glycine cleavage system catalyzes the degradation of glycine. The P protein binds the alpha-amino group of glycine through its pyridoxal phosphate cofactor; CO(2) is released and the remaining methylamine moiety is then transferred to the lipoamide cofactor of the H protein. The sequence is that of Glycine dehydrogenase (decarboxylating) from Idiomarina loihiensis (strain ATCC BAA-735 / DSM 15497 / L2-TR).